Consider the following 425-residue polypeptide: Elongation factor 1-alpha (425 aa).

The tr-type G domain occupies 5–221 (KPHMNLAVIG…DLFKMPDMPT (217 aa)). Positions 14 to 21 (GHIDHGKS) are G1. Position 14-21 (14-21 (GHIDHGKS)) interacts with GTP. Serine 21 provides a ligand contact to Mg(2+). Residues 70 to 74 (GITID) are G2. Residues 91–94 (DCPG) are G3. Residues 91–95 (DCPGH) and 146–149 (NKMD) contribute to the GTP site. Positions 146–149 (NKMD) are G4. The interval 185–187 (SAF) is G5.

The protein belongs to the TRAFAC class translation factor GTPase superfamily. Classic translation factor GTPase family. EF-Tu/EF-1A subfamily.

The protein localises to the cytoplasm. It catalyses the reaction GTP + H2O = GDP + phosphate + H(+). GTP hydrolase that promotes the GTP-dependent binding of aminoacyl-tRNA to the A-site of ribosomes during protein biosynthesis. The chain is Elongation factor 1-alpha from Methanocorpusculum labreanum (strain ATCC 43576 / DSM 4855 / Z).